The following is a 220-amino-acid chain: Guanylate kinase (220 aa).

The Guanylate kinase-like domain occupies Gly11 to Arg190. Ser18–Thr25 contributes to the ATP binding site.

The protein belongs to the guanylate kinase family.

Its subcellular location is the cytoplasm. It carries out the reaction GMP + ATP = GDP + ADP. Essential for recycling GMP and indirectly, cGMP. This is Guanylate kinase from Sphingopyxis alaskensis (strain DSM 13593 / LMG 18877 / RB2256) (Sphingomonas alaskensis).